The primary structure comprises 358 residues: MAVNQEKEKAIELAMSAVERQFGKGSIMRLGNDEPMMRDVQAIPTGSISLDIALGVGGVPKGRIIEIFGPESSGKTTLCLHIVAEAQKRGGICGYVDAEHALDVGYARKLGVRTDDLLLSQPDTGEQALEIAEMLVRSGAIDVLVVDSVAALVPKAELEGEMGDAHMGVQARLMSQALRKLTGTIAKSQTCVIFINQIRMKIGVMFGNPETTTGGNALKFYASQRLDIRRIGAIKNGDNVVGSRTRVKVVKNKVAPPFKEVEFDIMYGTGISREGDLIDLASNENIVEKSGSWFSFNGERIGQGRENVKEYLREHPEIAKDIEGRVLEKYGIGKSGAPSPRRRTSPRRPKVAARSAAV.

69-76 (GPESSGKT) contacts ATP. Residues 331 to 358 (GIGKSGAPSPRRRTSPRRPKVAARSAAV) are disordered. Residues 340 to 351 (PRRRTSPRRPKV) are compositionally biased toward basic residues.

It belongs to the RecA family.

Its subcellular location is the cytoplasm. Can catalyze the hydrolysis of ATP in the presence of single-stranded DNA, the ATP-dependent uptake of single-stranded DNA by duplex DNA, and the ATP-dependent hybridization of homologous single-stranded DNAs. It interacts with LexA causing its activation and leading to its autocatalytic cleavage. The polypeptide is Protein RecA 2 (Myxococcus xanthus).